Consider the following 212-residue polypeptide: Pyridoxine/pyridoxamine 5'-phosphate oxidase (212 aa).

Residues 8–11 (RKNY) and Lys66 contribute to the substrate site. Residues 61–66 (RIVLIK), 76–77 (FT), Arg82, Lys83, and Gln105 contribute to the FMN site. Substrate-binding residues include Tyr123, Arg127, and Ser131. Residues 140–141 (QS) and Trp184 each bind FMN. 190-192 (RLH) serves as a coordination point for substrate. Arg194 is a binding site for FMN.

This sequence belongs to the pyridoxamine 5'-phosphate oxidase family. In terms of assembly, homodimer. FMN is required as a cofactor.

It carries out the reaction pyridoxamine 5'-phosphate + O2 + H2O = pyridoxal 5'-phosphate + H2O2 + NH4(+). It catalyses the reaction pyridoxine 5'-phosphate + O2 = pyridoxal 5'-phosphate + H2O2. It participates in cofactor metabolism; pyridoxal 5'-phosphate salvage; pyridoxal 5'-phosphate from pyridoxamine 5'-phosphate: step 1/1. The protein operates within cofactor metabolism; pyridoxal 5'-phosphate salvage; pyridoxal 5'-phosphate from pyridoxine 5'-phosphate: step 1/1. In terms of biological role, catalyzes the oxidation of either pyridoxine 5'-phosphate (PNP) or pyridoxamine 5'-phosphate (PMP) into pyridoxal 5'-phosphate (PLP). This is Pyridoxine/pyridoxamine 5'-phosphate oxidase from Paraburkholderia phymatum (strain DSM 17167 / CIP 108236 / LMG 21445 / STM815) (Burkholderia phymatum).